The sequence spans 419 residues: MTTQLEQAWELAKQRFAAVGIDVEEALRQLDRLPVSMHCWQGDDVAGFENPEGSLTGGIQSTGNYPGKARNATELRADLEQALRLIPGPKRLNLHAIYLESDTPVARDQIKPEHFKNWVEWAKANRLGLDFNPTCFSHPLSADGFTLSHPDAKIRQFWIDHCKASRRVSAYFGEQLGTPSVMNIWIPDGMKDITVDRLAPRQRLLEALDEVISEKFDPAHHIDAVESKLFGIGAESYTVGSNEFYMGYATSRQTALCLDAGHFHPTEVISDKISAAMLYVPRLLLHVSRPVRWDSDHVVLLDDETQAIASEIVRHNLFDRVHIGLDFFDASINRVAAWVIGTRNMKKALLRALLEPTDQLRQLEASGDYTARLALLEEQKSLPWQAVWEMYCQRHDTPAGSQWLDSVRAYEKEILSKRS.

Mn(2+) is bound by residues H262, D294, and D296.

This sequence belongs to the rhamnose isomerase family. Homotetramer. The cofactor is Mn(2+).

It is found in the cytoplasm. The enzyme catalyses L-rhamnopyranose = L-rhamnulose. Its pathway is carbohydrate degradation; L-rhamnose degradation; glycerone phosphate from L-rhamnose: step 1/3. Functionally, catalyzes the interconversion of L-rhamnose and L-rhamnulose. The chain is L-rhamnose isomerase from Salmonella paratyphi A (strain AKU_12601).